The chain runs to 280 residues: Cytochrome c1 (280 aa).

Positions 1 to 21 are cleaved as a signal peptide; it reads MKKLLISAVSALVLGSGAALA. Cys55, Cys58, His59, and Met205 together coordinate heme c. A helical transmembrane segment spans residues 249-267; sequence MGLVAVVMLGLLSVMLYLT.

As to quaternary structure, the main subunits of complex b-c1 are: cytochrome b, cytochrome c1 and the Rieske protein. In terms of processing, binds 1 heme c group covalently per subunit.

It localises to the cell membrane. Functionally, component of the ubiquinol-cytochrome c reductase complex (complex III or cytochrome b-c1 complex), which is a respiratory chain that generates an electrochemical potential coupled to ATP synthesis. c1 functions as an electron donor to cytochrome c. The protein is Cytochrome c1 (petC) of Rhodobacter capsulatus (Rhodopseudomonas capsulata).